Here is a 765-residue protein sequence, read N- to C-terminus: MAATGTAAAAATGKLLVLLLLGLTAPAAALAGYIEALAANAGTGFAVAEPQIAMFCGKLNMHVNIQTGKWEPDPTGTKSCLGTKEEVLQYCQEIYPELQITNVMEANQPVNIDSWCRRDKKQCRSHIVIPFKCLVGEFVSDVLLVPENCQFFHQERMEVCEKHQRWHTVVKEACLTEGMTLYSYGMLLPCGVDQFHGTEYVCCPQTKVVDSDSTMSKEEEEEEEEDEEEDYALDKSEFPTEADLEDFTEAAADEDEDEEEEEEEEGEEVVEDRDYYYDSFKGDDYNEENPTEPSSDGTISDKEIAHDVKAVCSQEAMTGPCRAVMPRWYFDLSKGKCVRFIYGGCGGNRNNFESEDYCMAVCKTMIPPTPLPTNDVDVYFETSADDNEHARFQKAKEQLEIRHRSRMDRVKKEWEEAELQAKNLPKAERQTLIQHFQAMVKALEKEAASEKQQLVETHLARVEAMLNDRRRIALENYLAALQSDPPRPHRILQALRRYVRAENKDRLHTIRHYQHVLAVDPEKAAQMKSQVMTHLHVIEERRNQSLSLLYKVPYVAQEIQEEIDELLQEQRADMDQFTSSISENPVDVRVSSEESEEIPPFHPFHPFPSLSENEDTQPELYHPMKKGSGMAEQDGGLIGAEEKVINSKNKMDENMVIDETLDVKEMIFNAERVGGLEEEPDSVGPLREDFSLSSSALIGLLVIAVAIATVIVISLVMLRKRQYGTISHGIVEVHPMLTPEERHLNKMQNHGYENPTYKYLEQMQI.

Residues 1–31 form the signal peptide; it reads MAATGTAAAAATGKLLVLLLLGLTAPAAALA. Over 32–695 the chain is Extracellular; it reads GYIEALAANA…LREDFSLSSS (664 aa). The GFLD subdomain stretch occupies residues 46–139; the sequence is AVAEPQIAMF…PFKCLVGEFV (94 aa). Residues 46-205 enclose the E1 domain; sequence AVAEPQIAMF…HGTEYVCCPQ (160 aa). 6 disulfides stabilise this stretch: Cys-56–Cys-80, Cys-91–Cys-133, Cys-116–Cys-123, Cys-149–Cys-203, Cys-160–Cys-190, and Cys-174–Cys-202. The cuBD subdomain stretch occupies residues 147–205; the sequence is ENCQFFHQERMEVCEKHQRWHTVVKEACLTEGMTLYSYGMLLPCGVDQFHGTEYVCCPQ. Residues His-163, His-167, and Tyr-184 each coordinate Cu cation. The tract at residues 211 to 301 is disordered; the sequence is SDSTMSKEEE…EPSSDGTISD (91 aa). Ser-216 carries the post-translational modification Phosphoserine. 2 stretches are compositionally biased toward acidic residues: residues 218–231 and 240–271; these read EEEE…EEDY and TEAD…EVVE. Residues 272–284 show a composition bias toward basic and acidic residues; that stretch reads DRDYYYDSFKGDD. Residues 308 to 366 enclose the BPTI/Kunitz inhibitor domain; the sequence is VKAVCSQEAMTGPCRAVMPRWYFDLSKGKCVRFIYGGCGGNRNNFESEDYCMAVCKTMI. Intrachain disulfides connect Cys-312-Cys-362, Cys-321-Cys-345, and Cys-337-Cys-358. Residues 375–566 enclose the E2 domain; it reads DVDVYFETSA…QEIQEEIDEL (192 aa). At Ser-592 the chain carries Phosphoserine. The interval 597 to 616 is disordered; that stretch reads EIPPFHPFHPFPSLSENEDT. The O-linked (Xyl...) (chondroitin sulfate) serine glycan is linked to Ser-628. A helical transmembrane segment spans residues 696–718; that stretch reads ALIGLLVIAVAIATVIVISLVML. Topologically, residues 719 to 765 are cytoplasmic; that stretch reads RKRQYGTISHGIVEVHPMLTPEERHLNKMQNHGYENPTYKYLEQMQI. Residues 751–765 form an interaction with DAB2 region; the sequence is GYENPTYKYLEQMQI. Residues 752-757 carry the NPXY motif motif; the sequence is YENPTY.

This sequence belongs to the APP family. In terms of assembly, interacts with CPEB1. Interacts (via NPXY motif) with DAB2 (via PID domain); the interaction is impaired by tyrosine phosphorylation of the NPXY motif. Interacts (via cytoplasmic domain) with APBB2/FE65L. Interacts (via intracellular domain) with APBB3/FE65L2.

The protein resides in the membrane. May play a role in the regulation of hemostasis. The soluble form may have inhibitory properties towards coagulation factors. May interact with cellular G-protein signaling pathways. May bind to the DNA 5'-GTCACATG-3'(CDEI box). Inhibits trypsin, chymotrypsin, plasmin, factor XIA and plasma and glandular kallikrein. Modulates the Cu/Zn nitric oxide-catalyzed autodegradation of GPC1 heparan sulfate side chains in fibroblasts. The sequence is that of Amyloid beta precursor like protein 2 from Rattus norvegicus (Rat).